The sequence spans 275 residues: Putative pyruvate, phosphate dikinase regulatory protein (275 aa).

149–156 (GVSRTSKT) contributes to the ADP binding site.

This sequence belongs to the pyruvate, phosphate/water dikinase regulatory protein family. PDRP subfamily.

The enzyme catalyses N(tele)-phospho-L-histidyl/L-threonyl-[pyruvate, phosphate dikinase] + ADP = N(tele)-phospho-L-histidyl/O-phospho-L-threonyl-[pyruvate, phosphate dikinase] + AMP + H(+). It catalyses the reaction N(tele)-phospho-L-histidyl/O-phospho-L-threonyl-[pyruvate, phosphate dikinase] + phosphate + H(+) = N(tele)-phospho-L-histidyl/L-threonyl-[pyruvate, phosphate dikinase] + diphosphate. Bifunctional serine/threonine kinase and phosphorylase involved in the regulation of the pyruvate, phosphate dikinase (PPDK) by catalyzing its phosphorylation/dephosphorylation. This Levilactobacillus brevis (strain ATCC 367 / BCRC 12310 / CIP 105137 / JCM 1170 / LMG 11437 / NCIMB 947 / NCTC 947) (Lactobacillus brevis) protein is Putative pyruvate, phosphate dikinase regulatory protein.